We begin with the raw amino-acid sequence, 138 residues long: Putative nickel-responsive regulator (138 aa).

4 residues coordinate Ni(2+): His80, His91, His93, and Cys99.

The protein belongs to the transcriptional regulatory CopG/NikR family. Ni(2+) serves as cofactor.

Transcriptional regulator. The sequence is that of Putative nickel-responsive regulator from Campylobacter hominis (strain ATCC BAA-381 / DSM 21671 / CCUG 45161 / LMG 19568 / NCTC 13146 / CH001A).